Consider the following 136-residue polypeptide: Large-conductance mechanosensitive channel (136 aa).

Transmembrane regions (helical) follow at residues 9-29 (AFASRGNVIDMAVGIIIGAAF) and 79-99 (IQTIIDFTIIAFAIFMGVKAI).

The protein belongs to the MscL family. As to quaternary structure, homopentamer.

Its subcellular location is the cell inner membrane. Channel that opens in response to stretch forces in the membrane lipid bilayer. May participate in the regulation of osmotic pressure changes within the cell. The protein is Large-conductance mechanosensitive channel of Shewanella baltica (strain OS223).